A 61-amino-acid chain; its full sequence is Large ribosomal subunit protein bL32 (61 aa).

A compositionally biased stretch (basic residues) spans 1–22 (MAVPKKKTSRARRDRRRSHHAL). The segment at 1 to 24 (MAVPKKKTSRARRDRRRSHHALRG) is disordered.

It belongs to the bacterial ribosomal protein bL32 family.

This Rubrobacter xylanophilus (strain DSM 9941 / JCM 11954 / NBRC 16129 / PRD-1) protein is Large ribosomal subunit protein bL32.